Here is a 208-residue protein sequence, read N- to C-terminus: Glutathione S-transferase 1 (208 aa).

The region spanning M1 to D80 is the GST N-terminal domain. Residues S9, H50 to I52, and E64 to R66 contribute to the glutathione site. Positions C86 to F207 constitute a GST C-terminal domain.

The protein belongs to the GST superfamily. Theta family. In terms of assembly, homodimer.

It catalyses the reaction RX + glutathione = an S-substituted glutathione + a halide anion + H(+). Functionally, conjugation of reduced glutathione to a wide number of exogenous and endogenous hydrophobic electrophiles. This is Glutathione S-transferase 1 (Gst1) from Musca domestica (House fly).